Reading from the N-terminus, the 290-residue chain is Putative phosphoenolpyruvate synthase regulatory protein (290 aa).

170 to 177 (GVSRCGKT) is an ADP binding site.

It belongs to the pyruvate, phosphate/water dikinase regulatory protein family. PSRP subfamily.

The enzyme catalyses [pyruvate, water dikinase] + ADP = [pyruvate, water dikinase]-phosphate + AMP + H(+). It catalyses the reaction [pyruvate, water dikinase]-phosphate + phosphate + H(+) = [pyruvate, water dikinase] + diphosphate. Functionally, bifunctional serine/threonine kinase and phosphorylase involved in the regulation of the phosphoenolpyruvate synthase (PEPS) by catalyzing its phosphorylation/dephosphorylation. The polypeptide is Putative phosphoenolpyruvate synthase regulatory protein (ydiA) (Enterobacter agglomerans (Erwinia herbicola)).